The sequence spans 215 residues: 3-isopropylmalate dehydratase small subunit (215 aa).

It belongs to the LeuD family. LeuD type 1 subfamily. As to quaternary structure, heterodimer of LeuC and LeuD.

It carries out the reaction (2R,3S)-3-isopropylmalate = (2S)-2-isopropylmalate. It functions in the pathway amino-acid biosynthesis; L-leucine biosynthesis; L-leucine from 3-methyl-2-oxobutanoate: step 2/4. In terms of biological role, catalyzes the isomerization between 2-isopropylmalate and 3-isopropylmalate, via the formation of 2-isopropylmaleate. The protein is 3-isopropylmalate dehydratase small subunit of Marinobacter nauticus (strain ATCC 700491 / DSM 11845 / VT8) (Marinobacter aquaeolei).